The following is a 145-amino-acid chain: Large ribosomal subunit protein uL13 (145 aa).

This sequence belongs to the universal ribosomal protein uL13 family. In terms of assembly, part of the 50S ribosomal subunit.

In terms of biological role, this protein is one of the early assembly proteins of the 50S ribosomal subunit, although it is not seen to bind rRNA by itself. It is important during the early stages of 50S assembly. The polypeptide is Large ribosomal subunit protein uL13 (Bacillus cereus (strain ZK / E33L)).